We begin with the raw amino-acid sequence, 257 residues long: MKHSKKLFLCVSFLLITIFIGGGGFMNKDESKETEIKKSFNKTLSMYPIKNLEDLYDKEGYRDEEFNKGDKGMWIVHSEMNIQKKGKALESRGMVLYMDRNTRTTHGYFILTKIKDTGKVKTDDSEKKYPVKLENNKIIPTKQIKDEKLKKEIENFKFFSQYGNFKDLKDYKDGEVSYNPNAPNYSAKYQLSNNDYNVKQIRKRYDIPTEQAPKLLLKGTGDLKGSSTGSKNIEFTFVEKKGENIYFTDSVEYTPSG.

A helical membrane pass occupies residues 7–27 (LFLCVSFLLITIFIGGGGFMN).

This sequence belongs to the staphylococcal tandem lipoprotein family.

The protein localises to the cell membrane. This is an uncharacterized protein from Staphylococcus epidermidis (strain ATCC 12228 / FDA PCI 1200).